An 80-amino-acid chain; its full sequence is Kunitz-type serine protease inhibitor LmKTT-1b (80 aa).

A signal peptide spans 1 to 21; the sequence is MKSFLLIALVLFFLFVSYASA. The BPTI/Kunitz inhibitor domain occupies 25–75; that stretch reads CQLPSDVGKGKASFTRYYYNEEGGKCETFIYGGVGGNSNNFLTKEDCCREC. Disulfide bonds link cysteine 25/cysteine 75, cysteine 50/cysteine 71, and cysteine 72/cysteine 80.

Belongs to the venom Kunitz-type family. Scorpion delta-Ktx subfamily. Delta-Ktx 2 sub-subfamily. Expressed by the venom gland.

It is found in the secreted. Serine protease inhibitor that inhibits trypsin at a molar ratio of 1:1 (Ki=160 nM). Is thermostable. This chain is Kunitz-type serine protease inhibitor LmKTT-1b, found in Lychas mucronatus (Chinese swimming scorpion).